Here is a 275-residue protein sequence, read N- to C-terminus: Protein MGF 110-11L (275 aa).

A helical membrane pass occupies residues 5–25 (LGLLLGYSVLILTHELPDLSA). N61 carries an N-linked (GlcNAc...) asparagine; by host glycan. 2 helical membrane passes run 127 to 147 (HCCF…FAYH) and 149 to 169 (NLHL…IWLS).

Belongs to the asfivirus MGF 110 family.

It is found in the host membrane. In terms of biological role, plays a role in virus cell tropism, and may be required for efficient virus replication in macrophages. This is Protein MGF 110-11L from African swine fever virus (isolate Pig/Kenya/KEN-50/1950) (ASFV).